Consider the following 214-residue polypeptide: ATP-dependent Clp protease proteolytic subunit (214 aa).

The Nucleophile role is filled by Ser-113. The active site involves His-138.

The protein belongs to the peptidase S14 family. As to quaternary structure, fourteen ClpP subunits assemble into 2 heptameric rings which stack back to back to give a disk-like structure with a central cavity, resembling the structure of eukaryotic proteasomes.

The protein localises to the cytoplasm. The enzyme catalyses Hydrolysis of proteins to small peptides in the presence of ATP and magnesium. alpha-casein is the usual test substrate. In the absence of ATP, only oligopeptides shorter than five residues are hydrolyzed (such as succinyl-Leu-Tyr-|-NHMec, and Leu-Tyr-Leu-|-Tyr-Trp, in which cleavage of the -Tyr-|-Leu- and -Tyr-|-Trp bonds also occurs).. Cleaves peptides in various proteins in a process that requires ATP hydrolysis. Has a chymotrypsin-like activity. Plays a major role in the degradation of misfolded proteins. The polypeptide is ATP-dependent Clp protease proteolytic subunit (Teredinibacter turnerae (strain ATCC 39867 / T7901)).